A 439-amino-acid polypeptide reads, in one-letter code: Probable E3 ubiquitin-protein ligase makorin-1 (439 aa).

3 consecutive C3H1-type zinc fingers follow at residues Trp18–Ser45, Lys48–Pro74, and Glu163–Val190. Residues Lys73 to Ser118 form a disordered region. The makorin-type Cys-His stretch occupies residues Cys191–His218. An RING-type zinc finger spans residues Cys236–Arg290. Residues Gly319 to Pro348 form a C3H1-type 4 zinc finger. A disordered region spans residues Leu352–Thr371. The segment covering Gln358–Asn368 has biased composition (low complexity).

The catalysed reaction is S-ubiquitinyl-[E2 ubiquitin-conjugating enzyme]-L-cysteine + [acceptor protein]-L-lysine = [E2 ubiquitin-conjugating enzyme]-L-cysteine + N(6)-ubiquitinyl-[acceptor protein]-L-lysine.. It participates in protein modification; protein ubiquitination. Functionally, E3 ubiquitin ligase catalyzing the covalent attachment of ubiquitin moieties onto substrate proteins. This is Probable E3 ubiquitin-protein ligase makorin-1 from Danio rerio (Zebrafish).